Consider the following 398-residue polypeptide: 2-amino-3-ketobutyrate coenzyme A ligase (398 aa).

Position 111 to 112 (111 to 112 (CF)) interacts with pyridoxal 5'-phosphate. Residue H136 participates in substrate binding. Pyridoxal 5'-phosphate contacts are provided by residues S185, 210 to 213 (DDSH), 241 to 244 (TLGK), and 274 to 275 (SN). K244 is subject to N6-(pyridoxal phosphate)lysine. A substrate-binding site is contributed by R368.

This sequence belongs to the class-II pyridoxal-phosphate-dependent aminotransferase family. As to quaternary structure, homodimer. Pyridoxal 5'-phosphate is required as a cofactor.

It carries out the reaction glycine + acetyl-CoA = (2S)-2-amino-3-oxobutanoate + CoA. The protein operates within amino-acid degradation; L-threonine degradation via oxydo-reductase pathway; glycine from L-threonine: step 2/2. Its function is as follows. Catalyzes the cleavage of 2-amino-3-ketobutyrate to glycine and acetyl-CoA. The protein is 2-amino-3-ketobutyrate coenzyme A ligase of Salmonella typhimurium (strain LT2 / SGSC1412 / ATCC 700720).